A 739-amino-acid polypeptide reads, in one-letter code: Phosphoribosylformylglycinamidine synthase subunit PurL (739 aa).

H54 is an active-site residue. The ATP site is built by Y57 and K96. Residue E98 coordinates Mg(2+). Residues 99–102 (SHNH) and R121 contribute to the substrate site. The Proton acceptor role is filled by H100. D122 lines the Mg(2+) pocket. Residue Q245 coordinates substrate. A Mg(2+)-binding site is contributed by D273. 317 to 319 (ESQ) is a substrate binding site. ATP is bound by residues D500 and G537. N538 lines the Mg(2+) pocket. Residue S540 participates in substrate binding.

Belongs to the FGAMS family. As to quaternary structure, monomer. Part of the FGAM synthase complex composed of 1 PurL, 1 PurQ and 2 PurS subunits.

It localises to the cytoplasm. It catalyses the reaction N(2)-formyl-N(1)-(5-phospho-beta-D-ribosyl)glycinamide + L-glutamine + ATP + H2O = 2-formamido-N(1)-(5-O-phospho-beta-D-ribosyl)acetamidine + L-glutamate + ADP + phosphate + H(+). Its pathway is purine metabolism; IMP biosynthesis via de novo pathway; 5-amino-1-(5-phospho-D-ribosyl)imidazole from N(2)-formyl-N(1)-(5-phospho-D-ribosyl)glycinamide: step 1/2. In terms of biological role, part of the phosphoribosylformylglycinamidine synthase complex involved in the purines biosynthetic pathway. Catalyzes the ATP-dependent conversion of formylglycinamide ribonucleotide (FGAR) and glutamine to yield formylglycinamidine ribonucleotide (FGAM) and glutamate. The FGAM synthase complex is composed of three subunits. PurQ produces an ammonia molecule by converting glutamine to glutamate. PurL transfers the ammonia molecule to FGAR to form FGAM in an ATP-dependent manner. PurS interacts with PurQ and PurL and is thought to assist in the transfer of the ammonia molecule from PurQ to PurL. This Bacillus cereus (strain G9842) protein is Phosphoribosylformylglycinamidine synthase subunit PurL.